Reading from the N-terminus, the 66-residue chain is Conotoxin Lt3.5 (66 aa).

An N-terminal signal peptide occupies residues 1–20; that stretch reads MMSKLGALLTICLLLFPLTA. Residues 21–53 constitute a propeptide that is removed on maturation; it reads VPLDGDQPLDRHAERMHDGISPKRHPWFDPVKR. Disulfide bonds link Cys54-Cys66, Cys55-Cys62, and Cys59-Cys65. At Pro64 the chain carries 4-hydroxyproline.

It belongs to the conotoxin M superfamily. In terms of tissue distribution, expressed by the venom duct.

It is found in the secreted. In Conus litteratus (Lettered cone), this protein is Conotoxin Lt3.5.